The primary structure comprises 199 residues: Fe/S biogenesis protein NfuA (199 aa).

Positions 151 and 154 each coordinate [4Fe-4S] cluster.

It belongs to the NfuA family. As to quaternary structure, homodimer. Requires [4Fe-4S] cluster as cofactor.

In terms of biological role, involved in iron-sulfur cluster biogenesis. Binds a 4Fe-4S cluster, can transfer this cluster to apoproteins, and thereby intervenes in the maturation of Fe/S proteins. Could also act as a scaffold/chaperone for damaged Fe/S proteins. The polypeptide is Fe/S biogenesis protein NfuA (Xylella fastidiosa (strain 9a5c)).